Reading from the N-terminus, the 221-residue chain is MIIKVCGMREPQNIREVAALAINWIGFIFYERSKRFVERCPTEQQATDSEQLSPKKVGVFVNATIESMMEKASTYKLDYLQLHGNESPEDCHTLQKRGYSLIKAFPIATKEDFEKTREYEGRVDYFLFDTRCEGYGGSGKRFDWSILTGYKGETPFLLSGGIRPENAEAIRNFRHPRFAGIDLNSGFEIEPGLKDIDKLKNFIQQILHPAVETGRAPSPTV.

Belongs to the TrpF family.

The enzyme catalyses N-(5-phospho-beta-D-ribosyl)anthranilate = 1-(2-carboxyphenylamino)-1-deoxy-D-ribulose 5-phosphate. It functions in the pathway amino-acid biosynthesis; L-tryptophan biosynthesis; L-tryptophan from chorismate: step 3/5. The polypeptide is N-(5'-phosphoribosyl)anthranilate isomerase (Parabacteroides distasonis (strain ATCC 8503 / DSM 20701 / CIP 104284 / JCM 5825 / NCTC 11152)).